A 62-amino-acid chain; its full sequence is Large ribosomal subunit protein bL28 (62 aa).

Residues 1–27 are disordered; sequence MAKECVITGRKSRSGNKRSHAMNSSKR. The span at 10–20 shows a compositional bias: basic residues; sequence RKSRSGNKRSH.

Belongs to the bacterial ribosomal protein bL28 family.

This is Large ribosomal subunit protein bL28 from Listeria innocua serovar 6a (strain ATCC BAA-680 / CLIP 11262).